The sequence spans 994 residues: Bifunctional glutamine synthetase adenylyltransferase/adenylyl-removing enzyme (994 aa).

The tract at residues 1 to 487 (MVVTKLATQR…LHTKLFYQPL (487 aa)) is adenylyl removase. The tract at residues 492–994 (GPTGLEIAHG…KAVVRKVFGS (503 aa)) is adenylyl transferase.

It belongs to the GlnE family. It depends on Mg(2+) as a cofactor.

The catalysed reaction is [glutamine synthetase]-O(4)-(5'-adenylyl)-L-tyrosine + phosphate = [glutamine synthetase]-L-tyrosine + ADP. The enzyme catalyses [glutamine synthetase]-L-tyrosine + ATP = [glutamine synthetase]-O(4)-(5'-adenylyl)-L-tyrosine + diphosphate. In terms of biological role, involved in the regulation of glutamine synthetase GlnA, a key enzyme in the process to assimilate ammonia. When cellular nitrogen levels are high, the C-terminal adenylyl transferase (AT) inactivates GlnA by covalent transfer of an adenylyl group from ATP to specific tyrosine residue of GlnA, thus reducing its activity. Conversely, when nitrogen levels are low, the N-terminal adenylyl removase (AR) activates GlnA by removing the adenylyl group by phosphorolysis, increasing its activity. The regulatory region of GlnE binds the signal transduction protein PII (GlnB) which indicates the nitrogen status of the cell. The polypeptide is Bifunctional glutamine synthetase adenylyltransferase/adenylyl-removing enzyme (Mycobacterium tuberculosis (strain CDC 1551 / Oshkosh)).